A 187-amino-acid chain; its full sequence is uncharacterized protein (187 aa).

This is an uncharacterized protein from Acanthamoeba polyphaga mimivirus (APMV).